A 367-amino-acid chain; its full sequence is NADH-quinone oxidoreductase subunit D (367 aa).

The protein belongs to the complex I 49 kDa subunit family. In terms of assembly, NDH-1 is composed of 14 different subunits. Subunits NuoB, C, D, E, F, and G constitute the peripheral sector of the complex.

The protein resides in the cell membrane. It catalyses the reaction a quinone + NADH + 5 H(+)(in) = a quinol + NAD(+) + 4 H(+)(out). Its function is as follows. NDH-1 shuttles electrons from NADH, via FMN and iron-sulfur (Fe-S) centers, to quinones in the respiratory chain. The immediate electron acceptor for the enzyme in this species is believed to be a menaquinone. Couples the redox reaction to proton translocation (for every two electrons transferred, four hydrogen ions are translocated across the cytoplasmic membrane), and thus conserves the redox energy in a proton gradient. The polypeptide is NADH-quinone oxidoreductase subunit D (Geobacillus kaustophilus (strain HTA426)).